The primary structure comprises 230 residues: Large ribosomal subunit protein uL1 (230 aa).

Belongs to the universal ribosomal protein uL1 family. Part of the 50S ribosomal subunit.

Its function is as follows. Binds directly to 23S rRNA. The L1 stalk is quite mobile in the ribosome, and is involved in E site tRNA release. Protein L1 is also a translational repressor protein, it controls the translation of the L11 operon by binding to its mRNA. This chain is Large ribosomal subunit protein uL1, found in Bifidobacterium adolescentis (strain ATCC 15703 / DSM 20083 / NCTC 11814 / E194a).